Consider the following 381-residue polypeptide: Putative F-box protein At4g17200 (381 aa).

One can recognise an F-box domain in the interval 1–47; sequence MTTMSDLSPDLVGEILTRVPMTSLISVRCTCKMWNALSKEGIFFKAA.

The sequence is that of Putative F-box protein At4g17200 from Arabidopsis thaliana (Mouse-ear cress).